Reading from the N-terminus, the 109-residue chain is Putative glutaredoxin-C11 (109 aa).

The region spanning 2-108 (AEMVARLASE…PLLKSAGALW (107 aa)) is the Glutaredoxin domain. A disulfide bond links cysteine 22 and cysteine 25. The Responsive for interaction with TGA factors motif lies at 106-109 (ALWL).

This sequence belongs to the glutaredoxin family. CC-type subfamily.

It localises to the cytoplasm. The protein localises to the nucleus. Its function is as follows. Has a glutathione-disulfide oxidoreductase activity in the presence of NADPH and glutathione reductase. Reduces low molecular weight disulfides and proteins. The polypeptide is Putative glutaredoxin-C11 (GRXC11) (Oryza sativa subsp. japonica (Rice)).